The primary structure comprises 899 residues: MSDRIYHSYVNNFYQKAKSPKNTQLIKQIQRSNPTSPKKNLQIYKNINPFNHENCQRIIEENAIRFSDKKTVQLGTVYGCNILLTTKNSQPKVFEKLIQLSDNSNFRQVTLLKSISPVSVVKAKDFLNDSISNRSRSAQKMYSDKDKFQVGNNKSSLRSLIYFPLANIKDQISEESKSKRNKIKVIKDMPIQLDNSFQTINHQINSPNNNIVGDQSHVILHNIFKKRQQAEEGLQIQEEPQNYIKNKLELQERKMYLENQNPKSLSPIKIHFNEKSMPFKNKIQKKITYNEQSSIQQTITLIKKKILGPPSLYSRLKKNSEQFKNIENLIKNKAKESHEQNMQEYLKRIGCTDKNKKVFCINSQDQFVQEVLIELGWIENKLFKSDLFHLKWIYTDINKDYENLKEGQFYNHFQNNQELTNKGRLLRNIKLYLVSYPHLQKYFPIQFDVIYKQQKEEFLNEFQKFEIFRKFKDVIQIIKNDLTQELINQLTQIYHTKFIKKEEEEELQYGLITYFRQNQQFKQYIEYINQVNKDIINLLSKIPNPNINEMLIKYLNDLSILQVDKLECDQEQGDKNIQAQIINLSISIELDNILEQIYPYTNFCNFWIIKPCGSSKGQGLQIMSDDNQIVNYTTQLQARLVQKYIERIYICKSQEYPQLYNKKFDLRLWVLVKSFNPLTVYYYKHAYLRVCSSEYDLSDTRNIFSHFTNYSINRNKFIQNKNVEDSAISLKLLKHIIKKEHGISYQKKIQPQINEIIIHSLKSVQKKIKQNNSCFEIYGFDIIFDEQFNPYLLEVNLSPACSKRNEFISKLQKEMFISTLNILFNTEYYQIQNWKKIKIQDQIQKVINESTHTQLQEEVILNSNNFQSEDSEERFISAAITIQKWYRQIKLMKNENQKI.

Residues 471-835 (FKDVIQIIKN…TEYYQIQNWK (365 aa)) form the TTL domain. ATP-binding positions include 642-645 (QKYI), lysine 663, and aspartate 665.

Its subcellular location is the cytoplasm. It is found in the cytoskeleton. It localises to the cilium basal body. In terms of biological role, probable glycylase which modifies tubulin, generating side chains of glycine on the gamma-carboxyl groups of specific glutamate residues within the C-terminal tail of tubulin. This is Tubulin glycylase 3F (TTLL3F) from Tetrahymena thermophila (strain SB210).